Reading from the N-terminus, the 405-residue chain is Argininosuccinate synthase (405 aa).

12–20 (AYSGGLDTS) serves as a coordination point for ATP. L-citrulline is bound by residues Tyr92 and Ser97. ATP is bound at residue Gly122. Residues Thr124, Asn128, and Asp129 each contribute to the L-aspartate site. Position 128 (Asn128) interacts with L-citrulline. Arg132, Ser181, Ser190, Glu266, and Tyr278 together coordinate L-citrulline.

The protein belongs to the argininosuccinate synthase family. Type 1 subfamily. As to quaternary structure, homotetramer.

It localises to the cytoplasm. It catalyses the reaction L-citrulline + L-aspartate + ATP = 2-(N(omega)-L-arginino)succinate + AMP + diphosphate + H(+). Its pathway is amino-acid biosynthesis; L-arginine biosynthesis; L-arginine from L-ornithine and carbamoyl phosphate: step 2/3. This chain is Argininosuccinate synthase, found in Cronobacter sakazakii (strain ATCC BAA-894) (Enterobacter sakazakii).